The chain runs to 321 residues: Carnitine monooxygenase reductase subunit (321 aa).

Residues 4-109 (YQMFEVQVSQ…STPNNLFALI (106 aa)) enclose the FAD-binding FR-type domain. The 2Fe-2S ferredoxin-type domain occupies 233 to 321 (DAFTLVLARS…AKGKRLVLDL (89 aa)). [2Fe-2S] cluster is bound by residues cysteine 270, cysteine 275, cysteine 278, and cysteine 308.

This sequence belongs to the PDR/VanB family. CntB subfamily. As to quaternary structure, composed of an oxygenase subunit (yeaW) and a reductase subunit (yeaX). FMN serves as cofactor. The cofactor is [2Fe-2S] cluster.

The catalysed reaction is (R)-carnitine + NADH + O2 + H(+) = (3R)-3-hydroxy-4-oxobutanoate + trimethylamine + NAD(+) + H2O. The enzyme catalyses (R)-carnitine + NADPH + O2 + H(+) = (3R)-3-hydroxy-4-oxobutanoate + trimethylamine + NADP(+) + H2O. It functions in the pathway amine and polyamine metabolism; carnitine metabolism. In terms of biological role, converts carnitine to trimethylamine and malic semialdehyde. Can also use gamma-butyrobetaine, choline and betaine as substrates. This chain is Carnitine monooxygenase reductase subunit (yeaX), found in Escherichia coli (strain K12).